A 1170-amino-acid chain; its full sequence is DNA-directed RNA polymerase subunit beta (1170 aa).

Belongs to the RNA polymerase beta chain family. The RNAP catalytic core consists of 2 alpha, 1 beta, 1 beta' and 1 omega subunit. When a sigma factor is associated with the core the holoenzyme is formed, which can initiate transcription.

It carries out the reaction RNA(n) + a ribonucleoside 5'-triphosphate = RNA(n+1) + diphosphate. Its function is as follows. DNA-dependent RNA polymerase catalyzes the transcription of DNA into RNA using the four ribonucleoside triphosphates as substrates. This Corynebacterium urealyticum (strain ATCC 43042 / DSM 7109) protein is DNA-directed RNA polymerase subunit beta.